An 885-amino-acid chain; its full sequence is Leucine--tRNA ligase (885 aa).

Positions P48 to H58 match the 'HIGH' region motif. Residues T639–S643 carry the 'KMSKS' region motif. Residue K642 coordinates ATP.

The protein belongs to the class-I aminoacyl-tRNA synthetase family.

The protein localises to the cytoplasm. The enzyme catalyses tRNA(Leu) + L-leucine + ATP = L-leucyl-tRNA(Leu) + AMP + diphosphate. In Bordetella avium (strain 197N), this protein is Leucine--tRNA ligase.